An 85-amino-acid chain; its full sequence is Small ribosomal subunit protein uS17 (85 aa).

It belongs to the universal ribosomal protein uS17 family. In terms of assembly, part of the 30S ribosomal subunit.

Its function is as follows. One of the primary rRNA binding proteins, it binds specifically to the 5'-end of 16S ribosomal RNA. The chain is Small ribosomal subunit protein uS17 from Mesoplasma florum (strain ATCC 33453 / NBRC 100688 / NCTC 11704 / L1) (Acholeplasma florum).